The chain runs to 604 residues: Aspartate--tRNA(Asp/Asn) ligase (604 aa).

Glutamate 187 is an L-aspartate binding site. An aspartate region spans residues 211-214 (QQFK). L-aspartate-binding residues include arginine 233 and histidine 461. 233-235 (RDE) serves as a coordination point for ATP. Residue glutamate 495 participates in ATP binding. Residue arginine 502 coordinates L-aspartate. 547–550 (GLDR) lines the ATP pocket.

It belongs to the class-II aminoacyl-tRNA synthetase family. Type 1 subfamily. As to quaternary structure, homodimer.

The protein localises to the cytoplasm. The catalysed reaction is tRNA(Asx) + L-aspartate + ATP = L-aspartyl-tRNA(Asx) + AMP + diphosphate. Functionally, aspartyl-tRNA synthetase with relaxed tRNA specificity since it is able to aspartylate not only its cognate tRNA(Asp) but also tRNA(Asn). Reaction proceeds in two steps: L-aspartate is first activated by ATP to form Asp-AMP and then transferred to the acceptor end of tRNA(Asp/Asn). The chain is Aspartate--tRNA(Asp/Asn) ligase from Chlorobium luteolum (strain DSM 273 / BCRC 81028 / 2530) (Pelodictyon luteolum).